Reading from the N-terminus, the 1164-residue chain is DNA-directed RNA polymerase subunit beta' (1164 aa).

Positions 60, 62, 75, and 78 each coordinate Zn(2+). Residues Asp-449, Asp-451, and Asp-453 each contribute to the Mg(2+) site. 4 residues coordinate Zn(2+): Cys-776, Cys-850, Cys-857, and Cys-860.

It belongs to the RNA polymerase beta' chain family. As to quaternary structure, the RNAP catalytic core consists of 2 alpha, 1 beta, 1 beta' and 1 omega subunit. When a sigma factor is associated with the core the holoenzyme is formed, which can initiate transcription. Requires Mg(2+) as cofactor. Zn(2+) serves as cofactor.

It carries out the reaction RNA(n) + a ribonucleoside 5'-triphosphate = RNA(n+1) + diphosphate. Its function is as follows. DNA-dependent RNA polymerase catalyzes the transcription of DNA into RNA using the four ribonucleoside triphosphates as substrates. This chain is DNA-directed RNA polymerase subunit beta', found in Moorella thermoacetica (strain ATCC 39073 / JCM 9320).